Reading from the N-terminus, the 117-residue chain is uncharacterized protein (117 aa).

2 consecutive transmembrane segments (helical) span residues 43-63 (APIM…LMLL) and 73-93 (AVQH…VFIV).

The protein localises to the cell membrane. This is an uncharacterized protein from Bacillus subtilis (strain 168).